Consider the following 246-residue polypeptide: NAD-dependent protein deacylase (246 aa).

A Deacetylase sirtuin-type domain is found at 1–237 (MSLPYRHVVI…PRLVEEILAA (237 aa)). An NAD(+)-binding site is contributed by 13-32 (GAGISAESGIQTFRAQDGLW). 2 residues coordinate substrate: tyrosine 57 and arginine 60. 94-97 (QNID) contributes to the NAD(+) binding site. Histidine 112 functions as the Proton acceptor in the catalytic mechanism. Cysteine 120 and cysteine 139 together coordinate Zn(2+). NAD(+)-binding positions include 179–181 (GTS), 205–207 (NLE), and alanine 223.

It belongs to the sirtuin family. Class III subfamily. It depends on Zn(2+) as a cofactor.

The protein resides in the cytoplasm. It carries out the reaction N(6)-acetyl-L-lysyl-[protein] + NAD(+) + H2O = 2''-O-acetyl-ADP-D-ribose + nicotinamide + L-lysyl-[protein]. It catalyses the reaction N(6)-succinyl-L-lysyl-[protein] + NAD(+) + H2O = 2''-O-succinyl-ADP-D-ribose + nicotinamide + L-lysyl-[protein]. Its function is as follows. NAD-dependent lysine deacetylase and desuccinylase that specifically removes acetyl and succinyl groups on target proteins. Modulates the activities of several proteins which are inactive in their acylated form. The polypeptide is NAD-dependent protein deacylase (Vibrio cholerae serotype O1 (strain ATCC 39315 / El Tor Inaba N16961)).